A 625-amino-acid chain; its full sequence is Acetolactate synthase (625 aa).

Residues 1–29 form a disordered region; it reads MSAPTKPHARPQGAGNSVPNTVKPATQFP. Over residues 14–29 the composition is skewed to polar residues; it reads AGNSVPNTVKPATQFP. E92 provides a ligand contact to thiamine diphosphate. FAD contacts are provided by residues R194, 300-321, and 343-362; these read HGTV…LGTR and DIDP…IVGD. The tract at residues 436–516 is thiamine pyrophosphate binding; the sequence is QHQMWAAQFI…IKVALINNGN (81 aa). 2 residues coordinate Mg(2+): D487 and N514.

Belongs to the TPP enzyme family. Mg(2+) is required as a cofactor. It depends on thiamine diphosphate as a cofactor.

It carries out the reaction 2 pyruvate + H(+) = (2S)-2-acetolactate + CO2. It functions in the pathway amino-acid biosynthesis; L-isoleucine biosynthesis; L-isoleucine from 2-oxobutanoate: step 1/4. The protein operates within amino-acid biosynthesis; L-valine biosynthesis; L-valine from pyruvate: step 1/4. The protein is Acetolactate synthase (ilvB) of Mycobacterium leprae (strain TN).